Reading from the N-terminus, the 210-residue chain is MSLISNNEERSLRVRYCIAIALSALLISGCTTLRLPNQSTSVYHQQTWAQRYYDLSRISQWNIDGAFSIQQPGKTIIAAYDWQQKGMNYRIRIHSSLDIYSVNISGRPGMVTLWRSPRQHYTASTPEQLMQQQLGWQLPLSNLYYWIRGIPAPGAYQADFDTYTHLIALQQSGWHIRFSQYTTVGSVDLPRTLQLSNGPLAVKIVVKHWQ.

The signal sequence occupies residues 1 to 29 (MSLISNNEERSLRVRYCIAIALSALLISG). Cys-30 carries the N-palmitoyl cysteine lipid modification. Cys-30 is lipidated: S-diacylglycerol cysteine.

Belongs to the LolB family. Monomer.

Its subcellular location is the cell outer membrane. Its function is as follows. Plays a critical role in the incorporation of lipoproteins in the outer membrane after they are released by the LolA protein. The sequence is that of Outer-membrane lipoprotein LolB from Coxiella burnetii (strain CbuG_Q212) (Coxiella burnetii (strain Q212)).